The following is a 162-amino-acid chain: MPLKKAVYPGSFDPITYGHIDIIERGLKVFDTVIVAVARNSEKNSLFNVEERIALIREVLGDNSRAKVDTFDGLLVDYVRKQGATVIIRGLRAVSDFEYEFQLAQMNRSITQEVETLFMMTSVPYSYLSSSIVKEVSSLNGPIDGLVPPLVKKALDAKFNRS.

Position 11 (serine 11) interacts with substrate. ATP is bound by residues 11 to 12 (SF) and histidine 19. The substrate site is built by lysine 43, leucine 75, and arginine 89. ATP is bound by residues 90–92 (GLR), glutamate 100, and 125–131 (YSYLSSS).

It belongs to the bacterial CoaD family. As to quaternary structure, homohexamer. It depends on Mg(2+) as a cofactor.

It localises to the cytoplasm. The enzyme catalyses (R)-4'-phosphopantetheine + ATP + H(+) = 3'-dephospho-CoA + diphosphate. It participates in cofactor biosynthesis; coenzyme A biosynthesis; CoA from (R)-pantothenate: step 4/5. Functionally, reversibly transfers an adenylyl group from ATP to 4'-phosphopantetheine, yielding dephospho-CoA (dPCoA) and pyrophosphate. This chain is Phosphopantetheine adenylyltransferase, found in Geotalea uraniireducens (strain Rf4) (Geobacter uraniireducens).